A 725-amino-acid polypeptide reads, in one-letter code: MGDEDWEAEINPHMSSYVPIFEKDRYSSGENGDNFNRTPTSSSEMDDGPSRRDHFMKSGFASGRNFGNRDAGESNKRDNTSTMGGFGVGKSFGNRGFSNSKFEDGDSSGFWRESSNDCEDNPTRNRGFSKRGGYRDGNNSEASGPSRRGGRSSFRGCRGGFGLGSPNNDLDPDECMQRTGGLFGSRRPALSGTGNGDTSQSRSGSGSERGGYKGLNEEVITGSGKNSWKSEAEGGESSDTQGPKVTYIPPPPPEDEDSIFAHYQTGISFDKYDTILVEVSGHDAPPAILTFEEANLCQTLNNNIAKAGYTKLTPVQKYSIPIILAGRDLMACAQTGSGKTAAFLLPILAHMMHDGITASCFKELQEPECIIVAPTRELVNQIYLEARKFSFGTCVRAVVIYGGTQLGHSIRQIVQGCNILCATPGRLMDIIGKEKIGLKQIKYLVLDEADRMLDMGFGPEMKKLISCPGMPSKEQRQTLMFSATFPEEIQRLAAEFLKSNYLFVAVGQVGGACRDVQQTVLQVGQFSKREKLVEILRNIGDERTMVFVETKKKADFIATFLCQEKISTTSIHGDREQREREQALGDFRCGKCPVLVATSVAARGLDIENVQHVINFDLPSTIDEYVHRIGRTGRCGNTGRAISFFDLESDNHLAQPLVKVLTDAQQDVPAWLEEIAFSTYIPGFSGSTRGNVFASVDTRKGKSSLNTAGFSSSQAPNPVDDESWD.

The tract at residues 1 to 251 (MGDEDWEAEI…GPKVTYIPPP (251 aa)) is disordered. Polar residues predominate over residues 28–43 (SGENGDNFNRTPTSSS). Positions 70–79 (DAGESNKRDN) are enriched in basic and acidic residues. 2 stretches are compositionally biased toward low complexity: residues 143-156 (SGPS…SFRG) and 196-206 (GDTSQSRSGSG). 2 positions are modified to phosphoserine: serine 223 and serine 227. Residues 229 to 248 (KSEAEGGESSDTQGPKVTYI) are interaction with RANBP9. A Q motif motif is present at residues 289–317 (LTFEEANLCQTLNNNIAKAGYTKLTPVQK). The region spanning 320–503 (IPIILAGRDL…AEFLKSNYLF (184 aa)) is the Helicase ATP-binding domain. Position 333-340 (333-340 (AQTGSGKT)) interacts with ATP. The short motif at 447 to 450 (DEAD) is the DEAD box element. Positions 531-676 (KLVEILRNIG…DVPAWLEEIA (146 aa)) constitute a Helicase C-terminal domain. Positions 702-725 (KSSLNTAGFSSSQAPNPVDDESWD) are disordered. Residues 703 to 716 (SSLNTAGFSSSQAP) are compositionally biased toward polar residues. Serine 723 is subject to Phosphoserine.

This sequence belongs to the DEAD box helicase family. DDX4/VASA subfamily. Found in a mRNP complex, at least composed of TDRD1, TDRD6, TDRD7 and DDX4. Interacts with RANBP9. Interacts with RANBP10. Interacts with PIWIL2 and MAEL. Interacts with BMAL1 and CLOCK. Interacts with Tex19.1 and, probably, Tex19.2. Interacts with RBM46.

The protein resides in the cytoplasm. The protein localises to the perinuclear region. It carries out the reaction ATP + H2O = ADP + phosphate + H(+). Its function is as follows. ATP-dependent RNA helicase required during spermatogenesis to repress transposable elements and preventing their mobilization, which is essential for the germline integrity. Acts via the piRNA metabolic process, which mediates the repression of transposable elements during meiosis by forming complexes composed of piRNAs and Piwi proteins and governs the methylation and subsequent repression of transposons. Involved in the secondary piRNAs metabolic process, the production of piRNAs in fetal male germ cells through a ping-pong amplification cycle. Required for PIWIL2 slicing-triggered piRNA biogenesis: helicase activity enables utilization of one of the slice cleavage fragments generated by PIWIL2 and processing these pre-piRNAs into piRNAs. The chain is Probable ATP-dependent RNA helicase DDX4 (DDX4) from Macaca fascicularis (Crab-eating macaque).